We begin with the raw amino-acid sequence, 614 residues long: UvrABC system protein C (614 aa).

One can recognise a GIY-YIG domain in the interval 20-98; it reads TAPGVYRMYA…IKSLSPRYNV (79 aa). One can recognise a UVR domain in the interval 207–242; that stretch reads DELTRELGEQMQAASEALEFEQAARLRDLISSLRSM.

This sequence belongs to the UvrC family. In terms of assembly, interacts with UvrB in an incision complex.

The protein localises to the cytoplasm. Functionally, the UvrABC repair system catalyzes the recognition and processing of DNA lesions. UvrC both incises the 5' and 3' sides of the lesion. The N-terminal half is responsible for the 3' incision and the C-terminal half is responsible for the 5' incision. The protein is UvrABC system protein C of Stenotrophomonas maltophilia (strain K279a).